Reading from the N-terminus, the 167-residue chain is Centrin-3 (167 aa).

4 consecutive EF-hand domains span residues 25 to 60 (EQKQ…LGFD), 61 to 96 (VKKA…WILE), 98 to 133 (DPHE…LGEN), and 134 to 167 (MSDE…TGDI). The Ca(2+) site is built by aspartate 38, aspartate 40, aspartate 42, and glutamate 49. Serine 135 bears the Phosphoserine mark. Residues aspartate 147, aspartate 149, aspartate 151, glutamate 153, and glutamate 158 each contribute to the Ca(2+) site.

The protein belongs to the centrin family. As to quaternary structure, monomer. Component of the TREX-2 complex (transcription and export complex 2), composed of at least ENY2, GANP, PCID2, SEM1, and either centrin CETN2 or CETN3. Interacts with USP49.

Its subcellular location is the cytoplasm. It localises to the cytoskeleton. The protein localises to the microtubule organizing center. The protein resides in the centrosome. It is found in the nucleus. Its subcellular location is the nucleolus. It localises to the nucleus envelope. The protein localises to the nuclear pore complex. The protein resides in the centriole. Functionally, plays a fundamental role in microtubule-organizing center structure and function. In terms of biological role, as a component of the TREX-2 complex, involved in the export of mRNAs to the cytoplasm through the nuclear pores. The chain is Centrin-3 (Cetn3) from Mus musculus (Mouse).